The primary structure comprises 257 residues: Imidazole glycerol phosphate synthase subunit HisF (257 aa).

Catalysis depends on residues Asp11 and Asp130.

It belongs to the HisA/HisF family. In terms of assembly, heterodimer of HisH and HisF.

The protein resides in the cytoplasm. It carries out the reaction 5-[(5-phospho-1-deoxy-D-ribulos-1-ylimino)methylamino]-1-(5-phospho-beta-D-ribosyl)imidazole-4-carboxamide + L-glutamine = D-erythro-1-(imidazol-4-yl)glycerol 3-phosphate + 5-amino-1-(5-phospho-beta-D-ribosyl)imidazole-4-carboxamide + L-glutamate + H(+). It functions in the pathway amino-acid biosynthesis; L-histidine biosynthesis; L-histidine from 5-phospho-alpha-D-ribose 1-diphosphate: step 5/9. Its function is as follows. IGPS catalyzes the conversion of PRFAR and glutamine to IGP, AICAR and glutamate. The HisF subunit catalyzes the cyclization activity that produces IGP and AICAR from PRFAR using the ammonia provided by the HisH subunit. The polypeptide is Imidazole glycerol phosphate synthase subunit HisF (Tolumonas auensis (strain DSM 9187 / NBRC 110442 / TA 4)).